Reading from the N-terminus, the 170-residue chain is CCHC-type zinc finger nucleic acid binding protein (170 aa).

Residue Ser2 is modified to N-acetylserine. The CCHC-type 1 zinc-finger motif lies at 4 to 21 (NECFKCGRSGHWARECPT). At Lys8 the chain carries N6-acetyllysine. Arg25 and Arg27 each carry omega-N-methylarginine; by PRMT1. The tract at residues 25-33 (RGRGMRSRG) is RNA-binding Arg/Gly-rich region (RGG-box). Phosphoserine is present on Ser42. 6 consecutive CCHC-type zinc fingers follow at residues 45-62 (DICY…DCDL), 65-82 (DACY…DCKE), 89-106 (QCCY…DCDH), 110-127 (QKCY…DCTK), 128-145 (VKCY…NCSK), and 149-166 (VNCY…ECTI). Residue Arg72 is modified to Omega-N-methylarginine.

In terms of assembly, associates with the 40S ribosomal subunit, the 80S ribosome and with polysomes. Arginine methylation by PRMT1 in the Arg/Gly-rich region impedes RNA binding.

It is found in the nucleus. The protein resides in the cytoplasm. The protein localises to the endoplasmic reticulum. Its function is as follows. Single-stranded DNA-binding protein that preferentially binds to the sterol regulatory element (SRE) sequence 5'-GTGCGGTG-3', and thereby mediates transcriptional repression. Has a role as transactivator of the Myc promoter. Binds single-stranded RNA in a sequence-specific manner. Binds G-rich elements in target mRNA coding sequences. Prevents G-quadruplex structure formation in vitro, suggesting a role in supporting translation by resolving stable structures on mRNAs. In Bos taurus (Bovine), this protein is CCHC-type zinc finger nucleic acid binding protein (CNBP).